The following is an 83-amino-acid chain: UPF0248 protein TGAM_1209 (83 aa).

This sequence belongs to the UPF0248 family.

The sequence is that of UPF0248 protein TGAM_1209 from Thermococcus gammatolerans (strain DSM 15229 / JCM 11827 / EJ3).